A 639-amino-acid polypeptide reads, in one-letter code: ADP-ribosylation factor-binding protein GGA1 (639 aa).

Met-1 bears the N-acetylmethionine mark. Positions 17 to 147 (ATNPLNKELD…MLKKQGIVKS (131 aa)) constitute a VHS domain. An interaction with ARF3 region spans residues 114–274 (KILELLYSWT…RLASDTEDND (161 aa)). In terms of domain architecture, GAT spans 171 to 299 (DEEKSKMLAR…VINLYKQLVR (129 aa)). Ser-185 carries the phosphoserine modification. The unstructured hinge stretch occupies residues 300–509 (GEEVNGDATA…ITVPLESIKP (210 aa)). Disordered regions lie at residues 320–421 (LDLS…SGLD) and 434–492 (SLPP…QPVP). Ser-355 bears the Phosphoserine; by CK2 mark. An Autoinhibitory motif is present at residues 358–362 (DDELM). The span at 381–390 (GWNSFQSSDA) shows a compositional bias: polar residues. The residue at position 418 (Ser-418) is a Phosphoserine. The segment covering 462 to 480 (SSSCSSPSSSATSLLHTVS) has biased composition (low complexity). Pro residues predominate over residues 481-490 (PEPPRPPQQP). One can recognise a GAE domain in the interval 510-631 (SNILPVTVYD…NEMGDVDQFP (122 aa)).

This sequence belongs to the GGA protein family. As to quaternary structure, monomer. Interacts with GGA2 and GGA3. Binds to clathrin and activated ARFs, including ARF1, ARF5 and ARF6. Interacts with RABEP1. Interacts with RABGEF1. Interacts with the type-I membrane proteins LRP3, M6PR/CD-MPR and IGF2R/CI-MPR. Interacts (via N-terminal VHS domain) with SORL1/sorLA and SORT1 (via C-terminal cytosolic domain). Interacts with EPN4. Interacts with CCDC91. Interacts with HEATR5B/p200a. Interacts with SYNRG/gamma-synergin. Interacts (via GAE doamin) with NECAP1 and NECAP2. Interacts (via GAE domain) with AFTPH/aftiphilin. Interacts with TSG101 and UBC. Interacts with RNF11. Interacts (via VHS domain) with BACE1 (via DXXLL motif); the interaction highly increases when BACE1 is phosphorylated at 'Ser-498'. Interacts with CNST. Interacts with ADRA2B. Interacts with ARL3; the interaction recruits, in collaboration with RABEP1, PKD1:PKD2 complex to trans-Golgi network and is required for ciliary targeting. In terms of processing, phosphorylated by CK2 and dephosphorylated by PP2A. Phosphorylation of GGA1 allows the internal DXXLL motif to bind the VHS domain and to inhibit the recognition of cargo signals. Post-translationally, ubiquitinated. As to expression, ubiquitously expressed.

It localises to the golgi apparatus. The protein resides in the trans-Golgi network membrane. Its subcellular location is the endosome membrane. It is found in the early endosome membrane. Plays a role in protein sorting and trafficking between the trans-Golgi network (TGN) and endosomes. Mediates the ARF-dependent recruitment of clathrin to the TGN and binds ubiquitinated proteins and membrane cargo molecules with a cytosolic acidic cluster-dileucine (DXXLL) motif. Mediates export of the GPCR receptor ADRA2B to the cell surface. Required for targeting PKD1:PKD2 complex from the trans-Golgi network to the cilium membrane. Regulates retrograde transport of proteins such as phosphorylated form of BACE1 from endosomes to the trans-Golgi network. In Homo sapiens (Human), this protein is ADP-ribosylation factor-binding protein GGA1 (GGA1).